We begin with the raw amino-acid sequence, 573 residues long: Dihydroxy-acid dehydratase (573 aa).

Cysteine 62 is a binding site for [2Fe-2S] cluster. Residue aspartate 94 participates in Mg(2+) binding. Cysteine 135 lines the [2Fe-2S] cluster pocket. Mg(2+) contacts are provided by aspartate 136 and lysine 137. Lysine 137 is subject to N6-carboxylysine. Residue cysteine 212 coordinates [2Fe-2S] cluster. Mg(2+) is bound at residue glutamate 463. Serine 489 (proton acceptor) is an active-site residue.

It belongs to the IlvD/Edd family. In terms of assembly, homodimer. [2Fe-2S] cluster serves as cofactor. It depends on Mg(2+) as a cofactor.

It catalyses the reaction (2R)-2,3-dihydroxy-3-methylbutanoate = 3-methyl-2-oxobutanoate + H2O. It carries out the reaction (2R,3R)-2,3-dihydroxy-3-methylpentanoate = (S)-3-methyl-2-oxopentanoate + H2O. It participates in amino-acid biosynthesis; L-isoleucine biosynthesis; L-isoleucine from 2-oxobutanoate: step 3/4. It functions in the pathway amino-acid biosynthesis; L-valine biosynthesis; L-valine from pyruvate: step 3/4. Its function is as follows. Functions in the biosynthesis of branched-chain amino acids. Catalyzes the dehydration of (2R,3R)-2,3-dihydroxy-3-methylpentanoate (2,3-dihydroxy-3-methylvalerate) into 2-oxo-3-methylpentanoate (2-oxo-3-methylvalerate) and of (2R)-2,3-dihydroxy-3-methylbutanoate (2,3-dihydroxyisovalerate) into 2-oxo-3-methylbutanoate (2-oxoisovalerate), the penultimate precursor to L-isoleucine and L-valine, respectively. This is Dihydroxy-acid dehydratase from Renibacterium salmoninarum (strain ATCC 33209 / DSM 20767 / JCM 11484 / NBRC 15589 / NCIMB 2235).